Here is an 81-residue protein sequence, read N- to C-terminus: UPF0180 protein ABC2430 (81 aa).

The protein belongs to the UPF0180 family.

In Shouchella clausii (strain KSM-K16) (Alkalihalobacillus clausii), this protein is UPF0180 protein ABC2430.